The sequence spans 551 residues: MKANHIRILLLVTIAIMFISLMGKWEQTFPADNTKQQTSATQNNSHYDNADSSTNTDVTITDAKSSLAKETNFSKYDNAKSITINTVVFKDVKVSLLDGAIISASLKDYSISLDDKTPMSLLTDKSGSEYIAKSTIVVNKQPISVNFEDQGIKIENSKQILTLTGSADGLQITRTYTFDDTKYNISVSQNIKNTTSAPVNVIVDDSFARDFDPAGDSFSLLNAHSYTFTGVAYSTAKDSFRKESFKDISKTNGQPTVINSDGQGWVAFLQHYFVSAWIPQSTNAKIYYKNLNGDVFEAGAFTGATIAPNQSENISSILYTGPIIKANLVDLAPNLEKTLDYGMLSFFSEIIFWVMNHIHSLVGNWGLAIILVTCLIKLIFYPLSAKSYRSMAKMRMLQPRIKRLQETYKDDRQALGKKMMELYKEEKVNPLSGCLPMLIQIPIFISLYWVLLESVELRQAPFIFWIHDLSMKDPYFVLPVLMGLSMFLQQKLSPAPADPMQAKVMMFLPVIFTFLFASFPSGLVLYWLTNNLISISQQWIITRHYQATHKK.

The chain crosses the membrane as a helical span at residues 3-23; that stretch reads ANHIRILLLVTIAIMFISLMG. Residues 33 to 55 form a disordered region; it reads NTKQQTSATQNNSHYDNADSSTN. 3 helical membrane passes run 361–381, 431–451, and 504–524; these read LVGNWGLAIILVTCLIKLIFY, LSGCLPMLIQIPIFISLYWVL, and VMMFLPVIFTFLFASFPSGLV.

It belongs to the OXA1/ALB3/YidC family. Type 1 subfamily. As to quaternary structure, interacts with the Sec translocase complex via SecD. Specifically interacts with transmembrane segments of nascent integral membrane proteins during membrane integration.

The protein resides in the cell inner membrane. Functionally, required for the insertion and/or proper folding and/or complex formation of integral membrane proteins into the membrane. Involved in integration of membrane proteins that insert both dependently and independently of the Sec translocase complex, as well as at least some lipoproteins. Aids folding of multispanning membrane proteins. This is Membrane protein insertase YidC from Francisella tularensis subsp. holarctica (strain OSU18).